Here is a 659-residue protein sequence, read N- to C-terminus: Envelope glycoprotein (659 aa).

The N-terminal stretch at 1–35 is a signal peptide; it reads MLLISNPRHLGHPMSPGNWKRLIILLSCVFGGAEM. Topologically, residues 36–606 are extracellular; sequence NQQHNNPHQP…NRSPWLTTLL (571 aa). 2 disulfide bridges follow: C141–C162 and C154–C167. A disordered region spans residues 278-301; the sequence is LSPPASPIPTVQASPPAPSTPSPT. N318 is a glycosylation site (N-linked (GlcNAc...) asparagine; by host). Cystine bridges form between C328-C331, C328-C558, and C550-C557. The CXXC signature appears at 328–331; that stretch reads CWLC. N-linked (GlcNAc...) asparagine; by host glycans are attached at residues N389, N395, N407, and N427. Residues 466 to 486 form a fusion peptide region; the sequence is VSLTLAVLLGLGVAAGIGTGS. Residues 506-532 are a coiled coil; that stretch reads AMDTDLRALQDSISKLEDSLTSLSEVV. The segment at 533–549 is immunosuppression; the sequence is LQNRRGLDLLFLKEGGL. Residues 550–558 carry the CX6CC motif; that stretch reads CAALKEECC. The stretch at 567 to 587 forms a coiled coil; the sequence is VRDSMRRLKERLDKRQLEHQK. A helical transmembrane segment spans residues 607-627; that stretch reads SALAGPLLLLLLLLTLGPCVI. C625 is lipidated: S-palmitoyl cysteine; by host. At 628 to 659 the chain is on the cytoplasmic side; it reads NKLVQFINDRVSAVRILVLRHKYQTLDNEDNL. The short motif at 650–653 is the YXXL motif; contains endocytosis signal element; that stretch reads YQTL.

In terms of assembly, the mature envelope protein (Env) consists of a trimer of SU-TM heterodimers attached by a labile interchain disulfide bond. Specific enzymatic cleavages in vivo yield mature proteins. Envelope glycoproteins are synthesized as an inactive precursor that is N-glycosylated and processed likely by host cell furin or by a furin-like protease in the Golgi to yield the mature SU and TM proteins. The cleavage site between SU and TM requires the minimal sequence [KR]-X-[KR]-R. The R-peptide is released from the C-terminus of the cytoplasmic tail of the TM protein upon particle formation as a result of proteolytic cleavage by the viral protease. Cleavage of this peptide is required for TM to become fusogenic. In terms of processing, the CXXC motif is highly conserved across a broad range of retroviral envelope proteins. It is thought to participate in the formation of a labile disulfide bond possibly with the CX6CC motif present in the transmembrane protein. Isomerization of the intersubunit disulfide bond to an SU intrachain disulfide bond is thought to occur upon receptor recognition in order to allow membrane fusion. Post-translationally, the transmembrane protein is palmitoylated. The R-peptide is palmitoylated.

The protein localises to the virion membrane. The protein resides in the host cell membrane. Its function is as follows. The surface protein (SU) attaches the virus to the host cell by binding to its receptor. This interaction triggers the refolding of the transmembrane protein (TM) and is thought to activate its fusogenic potential by unmasking its fusion peptide. Fusion occurs at the host cell plasma membrane. In terms of biological role, the transmembrane protein (TM) acts as a class I viral fusion protein. Under the current model, the protein has at least 3 conformational states: pre-fusion native state, pre-hairpin intermediate state, and post-fusion hairpin state. During viral and target cell membrane fusion, the coiled coil regions (heptad repeats) assume a trimer-of-hairpins structure, positioning the fusion peptide in close proximity to the C-terminal region of the ectodomain. The formation of this structure appears to drive apposition and subsequent fusion of viral and target cell membranes. Membranes fusion leads to delivery of the nucleocapsid into the cytoplasm. This is Envelope glycoprotein (env) from Phascolarctos cinereus (Koala).